Consider the following 457-residue polypeptide: Multidrug resistance protein MdtK (457 aa).

12 helical membrane-spanning segments follow: residues 11–31 (LLAL…MGFV), 53–73 (IWLP…PVIA), 93–113 (WLAG…GYII), 127–147 (AVGY…FQVA), 160–180 (GMVM…IFIY), 189–209 (GGVG…LAMV), 243–263 (LPIA…ALLV), 276–296 (IALN…AAVT), 314–334 (AART…IFTV), 350–370 (VVTL…SDSI), 387–407 (IFYI…YILA), and 418–438 (PAGF…MMML).

It belongs to the multi antimicrobial extrusion (MATE) (TC 2.A.66.1) family. MdtK subfamily.

It localises to the cell inner membrane. In terms of biological role, multidrug efflux pump that functions probably as a Na(+)/drug antiporter. This chain is Multidrug resistance protein MdtK, found in Escherichia coli O45:K1 (strain S88 / ExPEC).